The following is a 278-amino-acid chain: Elongation factor Ts (278 aa).

Residues 82–85 are involved in Mg(2+) ion dislocation from EF-Tu; the sequence is TDFV.

Belongs to the EF-Ts family.

It is found in the cytoplasm. Associates with the EF-Tu.GDP complex and induces the exchange of GDP to GTP. It remains bound to the aminoacyl-tRNA.EF-Tu.GTP complex up to the GTP hydrolysis stage on the ribosome. The sequence is that of Elongation factor Ts (tsf) from Streptomyces coelicolor (strain ATCC BAA-471 / A3(2) / M145).